Consider the following 172-residue polypeptide: Dual-action ribosomal maturation protein DarP (172 aa).

This sequence belongs to the DarP family.

Its subcellular location is the cytoplasm. Member of a network of 50S ribosomal subunit biogenesis factors which assembles along the 30S-50S interface, preventing incorrect 23S rRNA structures from forming. Promotes peptidyl transferase center (PTC) maturation. This chain is Dual-action ribosomal maturation protein DarP, found in Ectopseudomonas mendocina (strain ymp) (Pseudomonas mendocina).